Reading from the N-terminus, the 200-residue chain is Ribosomal RNA large subunit methyltransferase E (200 aa).

Gly-49, Trp-51, Asp-69, Asp-87, and Asp-111 together coordinate S-adenosyl-L-methionine. Lys-151 acts as the Proton acceptor in catalysis.

It belongs to the class I-like SAM-binding methyltransferase superfamily. RNA methyltransferase RlmE family.

It localises to the cytoplasm. The catalysed reaction is uridine(2552) in 23S rRNA + S-adenosyl-L-methionine = 2'-O-methyluridine(2552) in 23S rRNA + S-adenosyl-L-homocysteine + H(+). Specifically methylates the uridine in position 2552 of 23S rRNA at the 2'-O position of the ribose in the fully assembled 50S ribosomal subunit. This Lawsonia intracellularis (strain PHE/MN1-00) protein is Ribosomal RNA large subunit methyltransferase E.